The following is a 338-amino-acid chain: Methionine import ATP-binding protein MetN 1 (338 aa).

The ABC transporter domain occupies 2–241 (IELHQVSKSF…AKHATTKRFV (240 aa)). 38–45 (GYSGAGKS) is an ATP binding site.

This sequence belongs to the ABC transporter superfamily. Methionine importer (TC 3.A.1.24) family. The complex is composed of two ATP-binding proteins (MetN), two transmembrane proteins (MetI) and a solute-binding protein (MetQ).

It localises to the cell membrane. It catalyses the reaction L-methionine(out) + ATP + H2O = L-methionine(in) + ADP + phosphate + H(+). It carries out the reaction D-methionine(out) + ATP + H2O = D-methionine(in) + ADP + phosphate + H(+). Part of the ABC transporter complex MetNIQ involved in methionine import. Responsible for energy coupling to the transport system. The sequence is that of Methionine import ATP-binding protein MetN 1 from Listeria innocua serovar 6a (strain ATCC BAA-680 / CLIP 11262).